The following is a 165-amino-acid chain: Cyclic pyranopterin monophosphate synthase (165 aa).

Residues 83-85 (FCH) and 120-121 (ME) contribute to the substrate site. The active site involves Asp-135.

It belongs to the MoaC family. In terms of assembly, homohexamer; trimer of dimers.

The enzyme catalyses (8S)-3',8-cyclo-7,8-dihydroguanosine 5'-triphosphate = cyclic pyranopterin phosphate + diphosphate. It functions in the pathway cofactor biosynthesis; molybdopterin biosynthesis. In terms of biological role, catalyzes the conversion of (8S)-3',8-cyclo-7,8-dihydroguanosine 5'-triphosphate to cyclic pyranopterin monophosphate (cPMP). The chain is Cyclic pyranopterin monophosphate synthase from Xanthomonas oryzae pv. oryzae (strain MAFF 311018).